The chain runs to 305 residues: Coiled-coil domain-containing protein 83 (305 aa).

A disordered region spans residues 1–25; that stretch reads MDSSAKGSKKDAPDGPPKDSKLPVS. The span at 8-21 shows a compositional bias: basic and acidic residues; that stretch reads SKKDAPDGPPKDSK. The stretch at 37-186 forms a coiled coil; sequence ENAVERFMFH…LEDEKKRISR (150 aa).

This Mus musculus (Mouse) protein is Coiled-coil domain-containing protein 83 (Ccdc83).